The primary structure comprises 101 residues: Small ribosomal subunit protein uS14 (101 aa).

The protein belongs to the universal ribosomal protein uS14 family. As to quaternary structure, part of the 30S ribosomal subunit. Contacts proteins S3 and S10.

Its function is as follows. Binds 16S rRNA, required for the assembly of 30S particles and may also be responsible for determining the conformation of the 16S rRNA at the A site. This chain is Small ribosomal subunit protein uS14, found in Maricaulis maris (strain MCS10) (Caulobacter maris).